The chain runs to 134 residues: DNA-directed RNA polymerase subunit omega (134 aa).

The tract at residues 77–108 (IDEPEPDPASLLAAGGNASASGDEEEDAPEAV) is disordered. A compositionally biased stretch (low complexity) spans 85-97 (ASLLAAGGNASAS).

Belongs to the RNA polymerase subunit omega family. The RNAP catalytic core consists of 2 alpha, 1 beta, 1 beta' and 1 omega subunit. When a sigma factor is associated with the core the holoenzyme is formed, which can initiate transcription.

The enzyme catalyses RNA(n) + a ribonucleoside 5'-triphosphate = RNA(n+1) + diphosphate. Its function is as follows. Promotes RNA polymerase assembly. Latches the N- and C-terminal regions of the beta' subunit thereby facilitating its interaction with the beta and alpha subunits. The sequence is that of DNA-directed RNA polymerase subunit omega from Rhizobium rhizogenes (strain K84 / ATCC BAA-868) (Agrobacterium radiobacter).